A 661-amino-acid chain; its full sequence is Threonine--tRNA ligase (661 aa).

In terms of domain architecture, TGS spans 1–64 (MSQAISLTFP…TTGRIEIITR (64 aa)). Residues 245–546 (DHRRLGREMD…LIENFAGHMP (302 aa)) are catalytic. Zn(2+)-binding residues include cysteine 341, histidine 392, and histidine 523.

Belongs to the class-II aminoacyl-tRNA synthetase family. Homodimer. It depends on Zn(2+) as a cofactor.

It localises to the cytoplasm. The catalysed reaction is tRNA(Thr) + L-threonine + ATP = L-threonyl-tRNA(Thr) + AMP + diphosphate + H(+). Functionally, catalyzes the attachment of threonine to tRNA(Thr) in a two-step reaction: L-threonine is first activated by ATP to form Thr-AMP and then transferred to the acceptor end of tRNA(Thr). Also edits incorrectly charged L-seryl-tRNA(Thr). The protein is Threonine--tRNA ligase of Rhizobium johnstonii (strain DSM 114642 / LMG 32736 / 3841) (Rhizobium leguminosarum bv. viciae).